Consider the following 194-residue polypeptide: GTP cyclohydrolase 1 (194 aa).

Zn(2+) is bound by residues Cys-83, His-86, and Cys-155.

It belongs to the GTP cyclohydrolase I family. As to quaternary structure, toroid-shaped homodecamer, composed of two pentamers of five dimers.

It carries out the reaction GTP + H2O = 7,8-dihydroneopterin 3'-triphosphate + formate + H(+). It functions in the pathway cofactor biosynthesis; 7,8-dihydroneopterin triphosphate biosynthesis; 7,8-dihydroneopterin triphosphate from GTP: step 1/1. The chain is GTP cyclohydrolase 1 (folE) from Streptococcus pyogenes serotype M1.